Here is a 162-residue protein sequence, read N- to C-terminus: NADH-quinone oxidoreductase subunit C (162 aa).

Belongs to the complex I 30 kDa subunit family. In terms of assembly, NDH-1 is composed of 14 different subunits. Subunits NuoB, C, D, E, F, and G constitute the peripheral sector of the complex.

Its subcellular location is the cell inner membrane. The enzyme catalyses a quinone + NADH + 5 H(+)(in) = a quinol + NAD(+) + 4 H(+)(out). Functionally, NDH-1 shuttles electrons from NADH, via FMN and iron-sulfur (Fe-S) centers, to quinones in the respiratory chain. The immediate electron acceptor for the enzyme in this species is believed to be ubiquinone. Couples the redox reaction to proton translocation (for every two electrons transferred, four hydrogen ions are translocated across the cytoplasmic membrane), and thus conserves the redox energy in a proton gradient. The chain is NADH-quinone oxidoreductase subunit C from Geobacter sulfurreducens (strain ATCC 51573 / DSM 12127 / PCA).